We begin with the raw amino-acid sequence, 477 residues long: 3-isopropylmalate dehydratase large subunit (477 aa).

C351, C411, and C414 together coordinate [4Fe-4S] cluster.

The protein belongs to the aconitase/IPM isomerase family. LeuC type 1 subfamily. Heterodimer of LeuC and LeuD. Requires [4Fe-4S] cluster as cofactor.

The enzyme catalyses (2R,3S)-3-isopropylmalate = (2S)-2-isopropylmalate. It participates in amino-acid biosynthesis; L-leucine biosynthesis; L-leucine from 3-methyl-2-oxobutanoate: step 2/4. Functionally, catalyzes the isomerization between 2-isopropylmalate and 3-isopropylmalate, via the formation of 2-isopropylmaleate. The chain is 3-isopropylmalate dehydratase large subunit from Kineococcus radiotolerans (strain ATCC BAA-149 / DSM 14245 / SRS30216).